The primary structure comprises 187 residues: Peptidyl-tRNA hydrolase (187 aa).

Residue Tyr-15 participates in tRNA binding. His-20 acts as the Proton acceptor in catalysis. Residues Tyr-64, Asn-66, and Asn-112 each coordinate tRNA.

It belongs to the PTH family. As to quaternary structure, monomer.

The protein localises to the cytoplasm. The enzyme catalyses an N-acyl-L-alpha-aminoacyl-tRNA + H2O = an N-acyl-L-amino acid + a tRNA + H(+). In terms of biological role, hydrolyzes ribosome-free peptidyl-tRNAs (with 1 or more amino acids incorporated), which drop off the ribosome during protein synthesis, or as a result of ribosome stalling. Catalyzes the release of premature peptidyl moieties from peptidyl-tRNA molecules trapped in stalled 50S ribosomal subunits, and thus maintains levels of free tRNAs and 50S ribosomes. The protein is Peptidyl-tRNA hydrolase of Phocaeicola vulgatus (strain ATCC 8482 / DSM 1447 / JCM 5826 / CCUG 4940 / NBRC 14291 / NCTC 11154) (Bacteroides vulgatus).